The chain runs to 165 residues: 3-isopropylmalate dehydratase small subunit (165 aa).

It belongs to the LeuD family. LeuD type 2 subfamily. In terms of assembly, heterodimer of LeuC and LeuD.

The enzyme catalyses (2R,3S)-3-isopropylmalate = (2S)-2-isopropylmalate. The protein operates within amino-acid biosynthesis; L-leucine biosynthesis; L-leucine from 3-methyl-2-oxobutanoate: step 2/4. Catalyzes the isomerization between 2-isopropylmalate and 3-isopropylmalate, via the formation of 2-isopropylmaleate. This is 3-isopropylmalate dehydratase small subunit from Lachnoclostridium phytofermentans (strain ATCC 700394 / DSM 18823 / ISDg) (Clostridium phytofermentans).